Reading from the N-terminus, the 129-residue chain is UPF0344 protein USA300HOU_0928 (129 aa).

Helical transmembrane passes span 1 to 21 (MLHL…ATYL), 36 to 56 (LHMI…WILI), 67 to 87 (MLLT…EVSI), and 99 to 119 (MFWI…ILPL).

Belongs to the UPF0344 family.

The protein resides in the cell membrane. The chain is UPF0344 protein USA300HOU_0928 from Staphylococcus aureus (strain USA300 / TCH1516).